Consider the following 76-residue polypeptide: DNA-directed RNA polymerase subunit epsilon (76 aa).

The protein belongs to the RNA polymerase subunit epsilon family. As to quaternary structure, RNAP is composed of a core of 2 alpha, a beta and a beta' subunit. The core is associated with a delta subunit, and at least one of epsilon or omega. When a sigma factor is associated with the core the holoenzyme is formed, which can initiate transcription.

The enzyme catalyses RNA(n) + a ribonucleoside 5'-triphosphate = RNA(n+1) + diphosphate. A non-essential component of RNA polymerase (RNAP). The chain is DNA-directed RNA polymerase subunit epsilon from Streptococcus gordonii (strain Challis / ATCC 35105 / BCRC 15272 / CH1 / DL1 / V288).